The primary structure comprises 340 residues: Uroporphyrinogen decarboxylase (340 aa).

Substrate is bound by residues 23-27, D72, Y147, T202, and H316; that span reads RQAGR.

This sequence belongs to the uroporphyrinogen decarboxylase family. In terms of assembly, homodimer.

It is found in the cytoplasm. It catalyses the reaction uroporphyrinogen III + 4 H(+) = coproporphyrinogen III + 4 CO2. The protein operates within porphyrin-containing compound metabolism; protoporphyrin-IX biosynthesis; coproporphyrinogen-III from 5-aminolevulinate: step 4/4. Functionally, catalyzes the decarboxylation of four acetate groups of uroporphyrinogen-III to yield coproporphyrinogen-III. The protein is Uroporphyrinogen decarboxylase of Pelobacter propionicus (strain DSM 2379 / NBRC 103807 / OttBd1).